We begin with the raw amino-acid sequence, 129 residues long: Large ribosomal subunit protein bL20 (129 aa).

Residues 1–17 (MARVKRSVNAHKKRRSV) show a composition bias toward basic residues. The segment at 1-29 (MARVKRSVNAHKKRRSVLKASKGYRGQRS) is disordered.

It belongs to the bacterial ribosomal protein bL20 family.

Binds directly to 23S ribosomal RNA and is necessary for the in vitro assembly process of the 50S ribosomal subunit. It is not involved in the protein synthesizing functions of that subunit. The chain is Large ribosomal subunit protein bL20 from Mycobacterium ulcerans (strain Agy99).